A 719-amino-acid chain; its full sequence is Glutamate--tRNA ligase, cytoplasmic (719 aa).

An ATP-binding site is contributed by Ser-93. Residues 176 to 205 (SGKPVAAPKSKDSQQAVKGDGQDKGKPEVD) form a disordered region. Residues 195–204 (DGQDKGKPEV) show a composition bias toward basic and acidic residues. Residue 217–219 (RFA) coordinates L-glutamate. The 'HIGH' region motif lies at 220–230 (PEPSGYLHIGH). His-227 provides a ligand contact to ATP. Residues 393–397 (YDFAC) and Arg-411 each bind L-glutamate. ATP-binding positions include Glu-414 and 448-452 (LLSKR). The 'KMSKS' region motif lies at 448–452 (LLSKR).

The protein belongs to the class-I aminoacyl-tRNA synthetase family. Glutamate--tRNA ligase type 2 subfamily. Interacts with GLN2, COL4 and RPP13L4/ZAR1.

The protein localises to the cytoplasm. The protein resides in the cytosol. It carries out the reaction tRNA(Glu) + L-glutamate + ATP = L-glutamyl-tRNA(Glu) + AMP + diphosphate. Catalyzes the attachment of glutamate to tRNA(Glu) in a two-step reaction: glutamate is first activated by ATP to form Glu-AMP and then transferred to the acceptor end of tRNA(Glu). The protein is Glutamate--tRNA ligase, cytoplasmic of Arabidopsis thaliana (Mouse-ear cress).